The sequence spans 404 residues: Sulfate adenylyltransferase (404 aa).

The protein belongs to the sulfate adenylyltransferase family.

The catalysed reaction is sulfate + ATP + H(+) = adenosine 5'-phosphosulfate + diphosphate. It functions in the pathway sulfur metabolism; hydrogen sulfide biosynthesis; sulfite from sulfate: step 1/3. The chain is Sulfate adenylyltransferase from Chlorobium chlorochromatii (strain CaD3).